The chain runs to 104 residues: Probable RNA-binding protein PA4753 (104 aa).

In terms of domain architecture, CRM spans Met1–Asn97.

The sequence is that of Probable RNA-binding protein PA4753 from Pseudomonas aeruginosa (strain ATCC 15692 / DSM 22644 / CIP 104116 / JCM 14847 / LMG 12228 / 1C / PRS 101 / PAO1).